The following is a 351-amino-acid chain: Peptide chain release factor 1 (351 aa).

Position 233 is an N5-methylglutamine (glutamine 233).

It belongs to the prokaryotic/mitochondrial release factor family. In terms of processing, methylated by PrmC. Methylation increases the termination efficiency of RF1.

Its subcellular location is the cytoplasm. In terms of biological role, peptide chain release factor 1 directs the termination of translation in response to the peptide chain termination codons UAG and UAA. The polypeptide is Peptide chain release factor 1 (prfA) (Treponema pallidum (strain Nichols)).